We begin with the raw amino-acid sequence, 115 residues long: AQIVMTQTPSSVSAAVGGTVTINCQSSQSVYENGRLSWFQQKPGQPPKRLIYRASTLASGVSSRFTGSGSGTQFTLSISDVQCDDAATYYCLGNYDCSSGDSFTFGGGTEVVVKG.

Residues 1–24 (AQIVMTQTPSSVSAAVGGTVTINC) are framework-1. Residues 25 to 37 (QSSQSVYENGRLS) form a complementarity-determining-1 region. The tract at residues 38-52 (WFQQKPGQPPKRLIY) is framework-2. The tract at residues 53–59 (RASTLAS) is complementarity-determining-2. The framework-3 stretch occupies residues 60–91 (GVSSRFTGSGSGTQFTLSISDVQCDDAATYYC). A complementarity-determining-3 region spans residues 92 to 104 (LGNYDCSSGDSFT). Residues 105–114 (FGGGTEVVVK) form a framework-4 region.

This Oryctolagus cuniculus (Rabbit) protein is Ig kappa chain V region 3315.